A 322-amino-acid polypeptide reads, in one-letter code: Eukaryotic translation initiation factor 3 subunit I (322 aa).

5 WD repeats span residues 4–43, 46–85, 141–180, 184–223, and 281–322; these read GHERSITQIKYNREGDLLFSCSKDQKPNVWYSLNGERLGT, GHQGAVWCLDVDWESRKLITGAGDMTTKIWDVEYGTIIAS, MTESKITSMLWGPLDETIITGHDNGNIAIWDIRKGQKVVD, DHTAGINDMQLSKDGTMFVTASKDTTAKLFDSESLMCLKT, and GHFG…NIFE.

The protein belongs to the eIF-3 subunit I family. Component of the eukaryotic translation initiation factor 3 (eIF-3) complex. The eIF-3 complex interacts with pix.

Its subcellular location is the cytoplasm. Functionally, component of the eukaryotic translation initiation factor 3 (eIF-3) complex, which is involved in protein synthesis of a specialized repertoire of mRNAs and, together with other initiation factors, stimulates binding of mRNA and methionyl-tRNAi to the 40S ribosome. The eIF-3 complex specifically targets and initiates translation of a subset of mRNAs involved in cell proliferation. The polypeptide is Eukaryotic translation initiation factor 3 subunit I (Drosophila ananassae (Fruit fly)).